A 275-amino-acid chain; its full sequence is Formamidopyrimidine-DNA glycosylase (275 aa).

Catalysis depends on P2, which acts as the Schiff-base intermediate with DNA. The Proton donor role is filled by E3. The Proton donor; for beta-elimination activity role is filled by K58. The DNA site is built by H91 and R110. The FPG-type zinc-finger motif lies at 238–272; that stretch reads QVYGQTGKPCPRCGQAIVKLKVGGRGTHICPKCQK. The active-site Proton donor; for delta-elimination activity is R262.

It belongs to the FPG family. As to quaternary structure, monomer. Zn(2+) is required as a cofactor.

It catalyses the reaction Hydrolysis of DNA containing ring-opened 7-methylguanine residues, releasing 2,6-diamino-4-hydroxy-5-(N-methyl)formamidopyrimidine.. The catalysed reaction is 2'-deoxyribonucleotide-(2'-deoxyribose 5'-phosphate)-2'-deoxyribonucleotide-DNA = a 3'-end 2'-deoxyribonucleotide-(2,3-dehydro-2,3-deoxyribose 5'-phosphate)-DNA + a 5'-end 5'-phospho-2'-deoxyribonucleoside-DNA + H(+). In terms of biological role, involved in base excision repair of DNA damaged by oxidation or by mutagenic agents. Acts as a DNA glycosylase that recognizes and removes damaged bases. Has a preference for oxidized purines, such as 7,8-dihydro-8-oxoguanine (8-oxoG). Has AP (apurinic/apyrimidinic) lyase activity and introduces nicks in the DNA strand. Cleaves the DNA backbone by beta-delta elimination to generate a single-strand break at the site of the removed base with both 3'- and 5'-phosphates. The sequence is that of Formamidopyrimidine-DNA glycosylase from Streptococcus pyogenes serotype M28 (strain MGAS6180).